Here is an 896-residue protein sequence, read N- to C-terminus: Translation initiation factor IF-2 (896 aa).

Positions 93–219 are enriched in basic and acidic residues; it reads VKRDPQEAER…RMAEENEKNW (127 aa). Residues 93-307 form a disordered region; it reads VKRDPQEAER…GSALQQGFQK (215 aa). The segment covering 256-271 has biased composition (basic residues); sequence GRSRSSKAARPAKKGN. The span at 272-285 shows a compositional bias: basic and acidic residues; the sequence is KHAESKADREEARA. In terms of domain architecture, tr-type G spans 395–564; sequence PRAPVVTIMG…LLQAEVLELK (170 aa). Positions 404-411 are G1; that stretch reads GHVDHGKT. Position 404-411 (404-411) interacts with GTP; that stretch reads GHVDHGKT. The tract at residues 429–433 is G2; sequence GITQH. Residues 450 to 453 form a G3 region; it reads DTPG. GTP contacts are provided by residues 450 to 454 and 504 to 507; these read DTPGH and NKID. The G4 stretch occupies residues 504–507; sequence NKID. Residues 540–542 form a G5 region; it reads SAK.

It belongs to the TRAFAC class translation factor GTPase superfamily. Classic translation factor GTPase family. IF-2 subfamily.

It is found in the cytoplasm. Its function is as follows. One of the essential components for the initiation of protein synthesis. Protects formylmethionyl-tRNA from spontaneous hydrolysis and promotes its binding to the 30S ribosomal subunits. Also involved in the hydrolysis of GTP during the formation of the 70S ribosomal complex. This Klebsiella pneumoniae subsp. pneumoniae (strain ATCC 700721 / MGH 78578) protein is Translation initiation factor IF-2.